A 459-amino-acid chain; its full sequence is Pentatricopeptide repeat-containing protein At1g07740, mitochondrial (459 aa).

The N-terminal 20 residues, 1-20 (MRRRLSSVLINNQCIASQRH), are a transit peptide targeting the mitochondrion. The tract at residues 19 to 41 (RHYHTSRPEKPTKKASSHEPTHK) is disordered. The span at 24–41 (SRPEKPTKKASSHEPTHK) shows a compositional bias: basic and acidic residues. PPR repeat units follow at residues 80–114 (DYPSYSSLIYKLAKSRNFDAVDQILRLVRYRNVRC), 115–149 (RESLFMGLIQHYGKAGSVDKAIDVFHKITSFDCVR), 150–184 (TIQSLNTLINVLVDNGELEKAKSFFDGAKDMRLRP), 185–219 (NSVSFNILIKGFLDKCDWEAACKVFDEMLEMEVQP), 220–254 (SVVTYNSLIGFLCRNDDMGKAKSLLEDMIKKRIRP), 255–289 (NAVTFGLLMKGLCCKGEYNEAKKLMFDMEYRGCKP), 290–324 (GLVNYGILMSDLGKRGRIDEAKLLLGEMKKRRIKP), 325–359 (DVVIYNILVNHLCTECRVPEAYRVLTEMQMKGCKP), 360–394 (NAATYRMMIDGFCRIEDFDSGLNVLNAMLASRHCP), and 395–429 (TPATFVCMVAGLIKGGNLDHACFVLEVMGKKNLSF).

It belongs to the PPR family. P subfamily.

Its subcellular location is the mitochondrion. The chain is Pentatricopeptide repeat-containing protein At1g07740, mitochondrial from Arabidopsis thaliana (Mouse-ear cress).